A 666-amino-acid chain; its full sequence is UvrABC system protein B (666 aa).

Residues 28-171 form the Helicase ATP-binding domain; it reads NNINQGIQRQ…YLHVGELIEF (144 aa). Residue 41–48 participates in ATP binding; it reads GATGTGKT. Positions 94-117 match the Beta-hairpin motif; that stretch reads YFDYYQPEAYKPITDTYIEKDSVT. Residues 436–598 enclose the Helicase C-terminal domain; that stretch reads QIDDLINELM…IIPKTIIKPI (163 aa). The UVR domain maps to 624–659; sequence NQKIKELKKKMEEAAKKREYEVAAQYRDMIVELEAI.

Belongs to the UvrB family. Forms a heterotetramer with UvrA during the search for lesions. Interacts with UvrC in an incision complex.

It localises to the cytoplasm. Its function is as follows. The UvrABC repair system catalyzes the recognition and processing of DNA lesions. A damage recognition complex composed of 2 UvrA and 2 UvrB subunits scans DNA for abnormalities. Upon binding of the UvrA(2)B(2) complex to a putative damaged site, the DNA wraps around one UvrB monomer. DNA wrap is dependent on ATP binding by UvrB and probably causes local melting of the DNA helix, facilitating insertion of UvrB beta-hairpin between the DNA strands. Then UvrB probes one DNA strand for the presence of a lesion. If a lesion is found the UvrA subunits dissociate and the UvrB-DNA preincision complex is formed. This complex is subsequently bound by UvrC and the second UvrB is released. If no lesion is found, the DNA wraps around the other UvrB subunit that will check the other stand for damage. This Ureaplasma parvum serovar 3 (strain ATCC 27815 / 27 / NCTC 11736) protein is UvrABC system protein B.